Consider the following 848-residue polypeptide: Phosphatidate phosphatase LPIN3 (848 aa).

Residues M1–I108 form an N-LIP region. Disordered regions lie at residues E97–R233, P271–R298, and A314–L373. Positions G135–K144 match the Nuclear localization signal motif. The span at G135–R146 shows a compositional bias: basic residues. The span at D151–A164 shows a compositional bias: acidic residues. Residues S155 and S156 each carry the phosphoserine modification. Positions E165–P191 are enriched in low complexity. Phosphoserine is present on S218. Residues P271 to E282 show a composition bias toward low complexity. The segment covering K342 to P358 has biased composition (polar residues). Phosphoserine is present on S460. A compositionally biased stretch (basic and acidic residues) spans E536 to E556. Positions E536–P568 are disordered. Residues Y587 to E789 are C-LIP. Residues D641–T645 carry the DXDXT motif motif. An LXXIL motif motif is present at residues L652–L656.

This sequence belongs to the lipin family. It depends on Mg(2+) as a cofactor. Significant expression in intestine and other regions of the gastrointestinal tract.

It localises to the nucleus. The enzyme catalyses a 1,2-diacyl-sn-glycero-3-phosphate + H2O = a 1,2-diacyl-sn-glycerol + phosphate. With respect to regulation, inhibited by N-ethylmaleimide. Functionally, magnesium-dependent phosphatidate phosphatase enzyme which catalyzes the conversion of phosphatidic acid to diacylglycerol during triglyceride, phosphatidylcholine and phosphatidylethanolamine biosynthesis therefore regulates fatty acid metabolism. The chain is Phosphatidate phosphatase LPIN3 from Mus musculus (Mouse).